The primary structure comprises 177 residues: Peptide methionine sulfoxide reductase MsrA (177 aa).

Cys15 is an active-site residue.

The protein belongs to the MsrA Met sulfoxide reductase family.

The enzyme catalyses L-methionyl-[protein] + [thioredoxin]-disulfide + H2O = L-methionyl-(S)-S-oxide-[protein] + [thioredoxin]-dithiol. It catalyses the reaction [thioredoxin]-disulfide + L-methionine + H2O = L-methionine (S)-S-oxide + [thioredoxin]-dithiol. Functionally, has an important function as a repair enzyme for proteins that have been inactivated by oxidation. Catalyzes the reversible oxidation-reduction of methionine sulfoxide in proteins to methionine. The polypeptide is Peptide methionine sulfoxide reductase MsrA (Listeria monocytogenes serotype 4b (strain CLIP80459)).